Reading from the N-terminus, the 509-residue chain is Probable cytochrome P450 4ac1 (509 aa).

2 residues coordinate heme: glutamate 317 and cysteine 454.

The protein belongs to the cytochrome P450 family. The cofactor is heme.

It localises to the endoplasmic reticulum membrane. The protein localises to the microsome membrane. In terms of biological role, may be involved in the metabolism of insect hormones and in the breakdown of synthetic insecticides. The chain is Probable cytochrome P450 4ac1 (Cyp4ac1) from Drosophila melanogaster (Fruit fly).